A 355-amino-acid chain; its full sequence is WAT1-related protein At3g28130 (355 aa).

10 helical membrane passes run 11–31, 42–62, 80–100, 104–124, 136–156, 186–206, 218–238, 244–264, 290–310, and 311–331; these read AVLLTAMLATETGNVAMNTLF, YTFLIYSYLIGSIVLLPSHIF, IGVLGLLGSTYLITGFIGIEY, TLASAISNINPAITFILAIIF, SVAKMVGTIVSLVGALVVVLY, WIIGGCLLAIKDTLVPVAFIL, FTVSFFYFLIASILTSLIGIV, PSIWIIHFDITLVCIVVGGIF, LSILIAVIMGAIFLGDSFYLG, and SLVGGILISLGFYTVMWGKAK. Positions 29–154 constitute an EamA domain; sequence TLFKAATSKG…VSLVGALVVV (126 aa).

The protein belongs to the drug/metabolite transporter (DMT) superfamily. Plant drug/metabolite exporter (P-DME) (TC 2.A.7.4) family.

The protein resides in the membrane. The chain is WAT1-related protein At3g28130 from Arabidopsis thaliana (Mouse-ear cress).